Reading from the N-terminus, the 415-residue chain is Tyrosine--tRNA ligase (415 aa).

A 'HIGH' region motif is present at residues 54-63 (PTGSNIHLGH). Residues 248–252 (KMSKS) carry the 'KMSKS' region motif. K251 is an ATP binding site. The region spanning 351-414 (AKAFYLFSAV…LGKKTFRRLV (64 aa)) is the S4 RNA-binding domain.

The protein belongs to the class-I aminoacyl-tRNA synthetase family. TyrS type 2 subfamily. Homodimer.

It is found in the cytoplasm. The catalysed reaction is tRNA(Tyr) + L-tyrosine + ATP = L-tyrosyl-tRNA(Tyr) + AMP + diphosphate + H(+). Catalyzes the attachment of tyrosine to tRNA(Tyr) in a two-step reaction: tyrosine is first activated by ATP to form Tyr-AMP and then transferred to the acceptor end of tRNA(Tyr). This is Tyrosine--tRNA ligase from Synechococcus sp. (strain CC9605).